Here is a 630-residue protein sequence, read N- to C-terminus: Subtilisin-like protease 1 (630 aa).

The N-terminal stretch at 1–25 is a signal peptide; the sequence is MVLTRRAALLLCPWVIQLVIKRTLA. The propeptide at 26–202 is inhibition peptide; that stretch reads GDILPNEGKK…IESDKLVGAD (177 aa). Residues 72-125 form a disordered region; sequence NAYNPDRDAPKEELQKLQDQQETPSKQPNNLRNSPQKRAEKKESPGKNKKSLRL. Residues 76–87 show a composition bias toward basic and acidic residues; it reads PDRDAPKEELQK. Positions 94-107 are enriched in polar residues; that stretch reads TPSKQPNNLRNSPQ. Residues 108–117 show a composition bias toward basic and acidic residues; sequence KRAEKKESPG. Ca(2+) contacts are provided by Glu-129, Asn-130, Thr-133, Pro-135, and Gly-190. The disordered stretch occupies residues 230 to 254; it reads LEVPSGESPPSHAASSGSPFDDDDD. Positions 233-248 are enriched in low complexity; that stretch reads PSGESPPSHAASSGSP. Position 281 (Asp-281) interacts with Ca(2+). The Peptidase S8 domain maps to 287 to 604; sequence QWGLDLARLD…GGYVDILRAV (318 aa). Cystine bridges form between Cys-313–Cys-423, Cys-402–Cys-419, and Cys-465–Cys-478. Asp-316 (charge relay system) is an active-site residue. The Ca(2+) site is built by Asp-325, Glu-336, Arg-340, Val-343, Asp-344, Asp-345, Asp-346, Asn-348, Val-350, Asp-352, and Asp-353. The active-site Charge relay system is the His-372. 4 residues coordinate Ca(2+): Val-383, Asn-386, Ile-388, and Ile-390. N-linked (GlcNAc...) asparagine glycosylation occurs at Asn-546. Ser-549 serves as the catalytic Charge relay system.

This sequence belongs to the peptidase S8 family. As to quaternary structure, heterodimer between p54 form and prodomain p31; the interaction inhibits p54 catalytic activity. Heterodimer p31-p54 is monomeric at basic pH and dimeric at acidic pH; dimerization is driven by the N-terminal prodomain (p31). It depends on Ca(2+) as a cofactor. In terms of processing, the prodomain (p31) is cleaved, probably by autocatalysis, and remains non-covalently associated with the p54 form as an inhibitor. p54 is further cleaved into the p45/p47 forms. The relevance of the N-glycosylation is not clear. In an insect expression system, SUB1 glycosylation appears to affect its processing into the active mature form suggesting that SUB1 may not be N-glycosylated in parasites.

The protein localises to the secreted. Its subcellular location is the parasitophorous vacuole lumen. It catalyses the reaction Hydrolysis of proteins with broad specificity for peptide bonds, and a preference for a large uncharged residue in P1. Hydrolyzes peptide amides.. Its activity is regulated as follows. Inhibited by peptidic alpha-ketoamide inhibitors. Inhibited by the alpha-ketoamide nonapeptide JMV5126 (isocaproyl-KITAQ(CO)DDEE-NH2). Inhibited by the alpha-ketoamide peptide MAM-117. In terms of biological role, serine protease which plays an essential role in merozoite invasion of and egress from host erythrocytes by processing and activating various merozoite surface and parasitophorous vacuole proteins. This Plasmodium vivax protein is Subtilisin-like protease 1.